Here is a 209-residue protein sequence, read N- to C-terminus: Leucyl/phenylalanyl-tRNA--protein transferase (209 aa).

Belongs to the L/F-transferase family.

Its subcellular location is the cytoplasm. The catalysed reaction is N-terminal L-lysyl-[protein] + L-leucyl-tRNA(Leu) = N-terminal L-leucyl-L-lysyl-[protein] + tRNA(Leu) + H(+). The enzyme catalyses N-terminal L-arginyl-[protein] + L-leucyl-tRNA(Leu) = N-terminal L-leucyl-L-arginyl-[protein] + tRNA(Leu) + H(+). It catalyses the reaction L-phenylalanyl-tRNA(Phe) + an N-terminal L-alpha-aminoacyl-[protein] = an N-terminal L-phenylalanyl-L-alpha-aminoacyl-[protein] + tRNA(Phe). Functions in the N-end rule pathway of protein degradation where it conjugates Leu, Phe and, less efficiently, Met from aminoacyl-tRNAs to the N-termini of proteins containing an N-terminal arginine or lysine. The sequence is that of Leucyl/phenylalanyl-tRNA--protein transferase from Paramagnetospirillum magneticum (strain ATCC 700264 / AMB-1) (Magnetospirillum magneticum).